We begin with the raw amino-acid sequence, 421 residues long: Tyrosine--tRNA ligase (421 aa).

Tyr35 lines the L-tyrosine pocket. Positions 40–49 match the 'HIGH' region motif; it reads PTGPSLHAGH. L-tyrosine contacts are provided by Tyr169 and Gln173. Residues 229-233 carry the 'KMSKS' region motif; the sequence is KFGKS. Residue Lys232 participates in ATP binding. The S4 RNA-binding domain occupies 354–420; the sequence is RTIVDLLIAS…GKKNFAGVKI (67 aa).

It belongs to the class-I aminoacyl-tRNA synthetase family. TyrS type 1 subfamily. As to quaternary structure, homodimer.

The protein resides in the cytoplasm. The enzyme catalyses tRNA(Tyr) + L-tyrosine + ATP = L-tyrosyl-tRNA(Tyr) + AMP + diphosphate + H(+). Its function is as follows. Catalyzes the attachment of tyrosine to tRNA(Tyr) in a two-step reaction: tyrosine is first activated by ATP to form Tyr-AMP and then transferred to the acceptor end of tRNA(Tyr). The polypeptide is Tyrosine--tRNA ligase (Corynebacterium efficiens (strain DSM 44549 / YS-314 / AJ 12310 / JCM 11189 / NBRC 100395)).